The following is a 238-amino-acid chain: tRNA (guanine-N(7)-)-methyltransferase (238 aa).

Residues Glu68, Glu93, Asp120, and Asp143 each contribute to the S-adenosyl-L-methionine site. Asp143 is a catalytic residue. Substrate contacts are provided by residues Lys147, Asp179, and 216–219 (TKFE).

This sequence belongs to the class I-like SAM-binding methyltransferase superfamily. TrmB family.

It carries out the reaction guanosine(46) in tRNA + S-adenosyl-L-methionine = N(7)-methylguanosine(46) in tRNA + S-adenosyl-L-homocysteine. It functions in the pathway tRNA modification; N(7)-methylguanine-tRNA biosynthesis. In terms of biological role, catalyzes the formation of N(7)-methylguanine at position 46 (m7G46) in tRNA. This chain is tRNA (guanine-N(7)-)-methyltransferase, found in Shewanella oneidensis (strain ATCC 700550 / JCM 31522 / CIP 106686 / LMG 19005 / NCIMB 14063 / MR-1).